Reading from the N-terminus, the 159-residue chain is Probable cyclic pyranopterin monophosphate synthase (159 aa).

Substrate-binding positions include 75–77 (LCH) and 111–112 (ME). Aspartate 126 is a catalytic residue.

Belongs to the MoaC family. Homohexamer; trimer of dimers.

It catalyses the reaction (8S)-3',8-cyclo-7,8-dihydroguanosine 5'-triphosphate = cyclic pyranopterin phosphate + diphosphate. It functions in the pathway cofactor biosynthesis; molybdopterin biosynthesis. Catalyzes the conversion of (8S)-3',8-cyclo-7,8-dihydroguanosine 5'-triphosphate to cyclic pyranopterin monophosphate (cPMP). This is Probable cyclic pyranopterin monophosphate synthase from Pyrococcus abyssi (strain GE5 / Orsay).